Reading from the N-terminus, the 119-residue chain is Large ribosomal subunit protein bL20 (119 aa).

Belongs to the bacterial ribosomal protein bL20 family.

Functionally, binds directly to 23S ribosomal RNA and is necessary for the in vitro assembly process of the 50S ribosomal subunit. It is not involved in the protein synthesizing functions of that subunit. This chain is Large ribosomal subunit protein bL20, found in Bacillus pumilus (strain SAFR-032).